Consider the following 282-residue polypeptide: tRNA uridine(34) hydroxylase (282 aa).

Positions 128–222 (EGRPVVMLDT…YFEEVGGSHY (95 aa)) constitute a Rhodanese domain. Cys-182 (cysteine persulfide intermediate) is an active-site residue.

It belongs to the TrhO family.

It carries out the reaction uridine(34) in tRNA + AH2 + O2 = 5-hydroxyuridine(34) in tRNA + A + H2O. Its function is as follows. Catalyzes oxygen-dependent 5-hydroxyuridine (ho5U) modification at position 34 in tRNAs. The protein is tRNA uridine(34) hydroxylase of Cupriavidus taiwanensis (strain DSM 17343 / BCRC 17206 / CCUG 44338 / CIP 107171 / LMG 19424 / R1) (Ralstonia taiwanensis (strain LMG 19424)).